Here is a 269-residue protein sequence, read N- to C-terminus: 4-hydroxy-tetrahydrodipicolinate reductase (269 aa).

Residues 10 to 15 and glutamate 36 contribute to the NAD(+) site; that span reads GSSGRM. Arginine 37 serves as a coordination point for NADP(+). NAD(+) contacts are provided by residues 99-101 and 123-126; these read GTT and APNM. Catalysis depends on histidine 156, which acts as the Proton donor/acceptor. (S)-2,3,4,5-tetrahydrodipicolinate is bound at residue histidine 157. The active-site Proton donor is the lysine 160. (S)-2,3,4,5-tetrahydrodipicolinate is bound at residue 166–167; the sequence is GT.

The protein belongs to the DapB family.

The protein resides in the cytoplasm. The enzyme catalyses (S)-2,3,4,5-tetrahydrodipicolinate + NAD(+) + H2O = (2S,4S)-4-hydroxy-2,3,4,5-tetrahydrodipicolinate + NADH + H(+). The catalysed reaction is (S)-2,3,4,5-tetrahydrodipicolinate + NADP(+) + H2O = (2S,4S)-4-hydroxy-2,3,4,5-tetrahydrodipicolinate + NADPH + H(+). The protein operates within amino-acid biosynthesis; L-lysine biosynthesis via DAP pathway; (S)-tetrahydrodipicolinate from L-aspartate: step 4/4. Catalyzes the conversion of 4-hydroxy-tetrahydrodipicolinate (HTPA) to tetrahydrodipicolinate. This is 4-hydroxy-tetrahydrodipicolinate reductase from Nitrosospira multiformis (strain ATCC 25196 / NCIMB 11849 / C 71).